The following is a 218-amino-acid chain: Protein-methionine-sulfoxide reductase heme-binding subunit MsrQ (218 aa).

A run of 5 helical transmembrane segments spans residues 12–32 (TLIK…LALF), 82–102 (MLGL…LWFD), 118–138 (PFIT…ITST), 150–170 (WQWL…HYWW), and 180–200 (QPII…FWAW).

Belongs to the MsrQ family. As to quaternary structure, heterodimer of a catalytic subunit (MsrP) and a heme-binding subunit (MsrQ). Requires FMN as cofactor. Heme b serves as cofactor.

The protein localises to the cell inner membrane. Part of the MsrPQ system that repairs oxidized periplasmic proteins containing methionine sulfoxide residues (Met-O), using respiratory chain electrons. Thus protects these proteins from oxidative-stress damage caused by reactive species of oxygen and chlorine generated by the host defense mechanisms. MsrPQ is essential for the maintenance of envelope integrity under bleach stress, rescuing a wide series of structurally unrelated periplasmic proteins from methionine oxidation. MsrQ provides electrons for reduction to the reductase catalytic subunit MsrP, using the quinone pool of the respiratory chain. The polypeptide is Protein-methionine-sulfoxide reductase heme-binding subunit MsrQ (Herminiimonas arsenicoxydans).